The sequence spans 193 residues: Penicillin-binding protein activator LpoB (193 aa).

The signal sequence occupies residues 1–16 (MKKMLFVVAAVFLLAG). Cysteine 17 is lipidated: N-palmitoyl cysteine. A lipid anchor (S-diacylglycerol cysteine) is attached at cysteine 17. The segment at 23–50 (QQPPAPVEPVTPTEPTEPPKPIEPPIEV) is disordered. The segment covering 37-46 (PTEPPKPIEP) has biased composition (pro residues).

It belongs to the LpoB family. As to quaternary structure, interacts with PBP1b.

It is found in the cell outer membrane. In terms of biological role, regulator of peptidoglycan synthesis that is essential for the function of penicillin-binding protein 1B (PBP1b). The polypeptide is Penicillin-binding protein activator LpoB (Proteus mirabilis (strain HI4320)).